Reading from the N-terminus, the 419-residue chain is O-methyltransferase desB (419 aa).

S-adenosyl-L-methionine-binding positions include 255–256 (GG), D280, 306–307 (DF), and R323. Catalysis depends on H326, which acts as the Proton acceptor.

This sequence belongs to the class I-like SAM-binding methyltransferase superfamily. Cation-independent O-methyltransferase family. Requires S-adenosyl-L-methionine as cofactor.

It functions in the pathway secondary metabolite biosynthesis. Functionally, non-reducing polyketide synthase; part of the gene cluster that mediates the biosynthesis of the bicoumarin desertorin. The non-reducing polyketide synthase desS first catalyzes the formation of the pentaketidic 4,7-dihydroxy-5-methylcoumarin from acetyl coenzyme A and 4 malonyl coenzyme A molecules. Further O-methylation by desB leads to the formation of 7-demethylsiderin. Then, an oxidative phenol coupling catalyzed by the cytochrome P450 monooxygenase desC forms the 6,8'-dimer M-desertorin A via dimerization the monomeric precursor, 7-demethylsiderin. M-desertorin A is further converted to M-desertorin C. The chain is O-methyltransferase desB from Aspergillus desertorum (Emericella desertorum).